Here is an 866-residue protein sequence, read N- to C-terminus: Primer-independent DNA polymerase PolB (866 aa).

Residues Ser-50 to Met-286 are exonuclease domain. The palm1 domain stretch occupies residues Ala-287 to Tyr-385. Positions Gly-386 to Pro-481 are TPR1 domain. The fingers domain stretch occupies residues Phe-482–Thr-522. A TPR2 domain region spans residues Ala-523–Thr-549. The palm2 domain stretch occupies residues Gly-550 to Leu-678. The segment at Ile-679–Val-866 is thumb domain.

It depends on Mn(2+) as a cofactor.

It carries out the reaction DNA(n) + a 2'-deoxyribonucleoside 5'-triphosphate = DNA(n+1) + diphosphate. Functionally, DNA polymerase with primer-independent templated DNA polymerization activity, primer-dependent DNA polymerization activity with strand displacement, translesion synthesis activity across non-bulky base damage, 3'-5' exodeoxyribonuclease activity, and de novo primer synthesis activity. The enzyme is processive and faithful. Translation synthesis across abasic sites is coupled to de novo primer synthesis. Overexpression of wild-type protein increases survival of cells upon mitomycin C or UV treatment. The sequence is that of Primer-independent DNA polymerase PolB (pi-polB) from Escherichia coli.